We begin with the raw amino-acid sequence, 2167 residues long: Glutamate synthase 1 [NADH], chloroplastic (2167 aa).

The tract at residues 1–31 is disordered; that stretch reads MSAAQGMAYKLRTDAAPTGAGRRARRSHSSV. The N-terminal 36 residues, 1–36, are a transit peptide targeting the chloroplast; that stretch reads MSAAQGMAYKLRTDAAPTGAGRRARRSHSSVAAPYR. Cys100 acts as the Nucleophile in catalysis. The 405-residue stretch at 100-504 folds into the Glutamine amidotransferase type-2 domain; sequence CGVGFVAELS…PGMMLLVDFE (405 aa). The disordered stretch occupies residues 1022 to 1042; it reads KSNTGEGGEQPSRMEPLANGS. 1192–1249 contacts FMN; it reads LAETHQTLVANGLRGRAILQTDGQLKTGKDVAVACLLGAEEFGFSTAPLITLGCIMMR. [3Fe-4S] cluster contacts are provided by Cys1245, Cys1251, and Cys1256. 1956-1970 is an NAD(+) binding site; that stretch reads GGGDTGTDCIGTSIR.

This sequence belongs to the glutamate synthase family. As to quaternary structure, monomer. [3Fe-4S] cluster serves as cofactor. It depends on FAD as a cofactor. Requires FMN as cofactor. Highly expressed in roots.

It is found in the plastid. The protein localises to the chloroplast. The enzyme catalyses 2 L-glutamate + NAD(+) = L-glutamine + 2-oxoglutarate + NADH + H(+). It functions in the pathway amino-acid biosynthesis; L-glutamate biosynthesis via GLT pathway; L-glutamate from 2-oxoglutarate and L-glutamine (NAD(+) route): step 1/1. The protein operates within energy metabolism; nitrogen metabolism. Involved in glutamate biosynthesis and plays a major role in the primary ammonium ions assimilation in seedling roots. May be involved in the reutilization of glutamine in developing organs. Plays a role in the development of tillers. The sequence is that of Glutamate synthase 1 [NADH], chloroplastic from Oryza sativa subsp. japonica (Rice).